Reading from the N-terminus, the 313-residue chain is Glyoxylate/hydroxypyruvate reductase A (313 aa).

Arg228 is an active-site residue. The active-site Proton donor is His276.

It belongs to the D-isomer specific 2-hydroxyacid dehydrogenase family. GhrA subfamily.

It localises to the cytoplasm. The enzyme catalyses glycolate + NADP(+) = glyoxylate + NADPH + H(+). It carries out the reaction (R)-glycerate + NAD(+) = 3-hydroxypyruvate + NADH + H(+). It catalyses the reaction (R)-glycerate + NADP(+) = 3-hydroxypyruvate + NADPH + H(+). Functionally, catalyzes the NADPH-dependent reduction of glyoxylate and hydroxypyruvate into glycolate and glycerate, respectively. This Serratia proteamaculans (strain 568) protein is Glyoxylate/hydroxypyruvate reductase A.